The primary structure comprises 332 residues: Oligopeptide transport ATP-binding protein OppF (332 aa).

In terms of domain architecture, ABC transporter spans 23-264; sequence KNDKSLFFAK…TKHPYTKALM (242 aa). 56-63 lines the ATP pocket; it reads GESGCGKS.

Belongs to the ABC transporter superfamily. The complex is composed of two ATP-binding proteins (OppD and OppF), two transmembrane proteins (OppB and OppC) and a solute-binding protein (OppA).

It localises to the cell inner membrane. It carries out the reaction a [peptide](out) + ATP + H2O = a [peptide](in) + ADP + phosphate + H(+). Its function is as follows. Part of the ABC transporter complex OppABCDF involved in the uptake of oligopeptides. Probably responsible for energy coupling to the transport system. In Haemophilus influenzae (strain ATCC 51907 / DSM 11121 / KW20 / Rd), this protein is Oligopeptide transport ATP-binding protein OppF (oppF).